Here is a 360-residue protein sequence, read N- to C-terminus: Insulin gene enhancer protein ISL-2 (360 aa).

LIM zinc-binding domains follow at residues 25–86 (AMCV…RLFG) and 87–149 (IKCA…LLER). Positions 151 to 177 (AAGSPRSPGPLPGTPPGLHLPDAGSGQ) are disordered. A phosphoserine mark is found at S154 and S157. Residues 192–251 (TTRVRTVLNEKQLHTLRTCYAANPRPDALMKEQLVEMTGLSPRVIRVWFQNKRCKDKKKS) constitute a DNA-binding region (homeobox). The tract at residues 273–302 (GTLLVAGSPSAHENAVQGSAVEVQTYQPPW) is LIM-binding domain (LID). S280 carries the phosphoserine modification. A compositionally biased stretch (low complexity) spans 328–337 (SGSLGNSSGS). Residues 328–360 (SGSLGNSSGSDVTSLSSQLPDTPNSMVPSPVET) are disordered. Positions 338–360 (DVTSLSSQLPDTPNSMVPSPVET) are enriched in polar residues.

Interacts with LHX4.

It is found in the nucleus. Functionally, transcriptional factor that defines subclasses of motoneurons that segregate into columns in the spinal cord and select distinct axon pathways. The protein is Insulin gene enhancer protein ISL-2 (Isl2) of Rattus norvegicus (Rat).